The primary structure comprises 735 residues: Cyclic nucleotide-gated channel cone photoreceptor subunit alpha (735 aa).

The Cytoplasmic segment spans residues 1-214; that stretch reads MAKINTQHSY…PSSNMYYNWL (214 aa). The segment at 142–191 is disordered; sequence VNFSNNTNEDKKEEKKEVKEEKKEEKKEEKKEEKKDDKKDDKKDDKKDDK. Residues 149–191 are compositionally biased toward basic and acidic residues; the sequence is NEDKKEEKKEVKEEKKEEKKEEKKEEKKDDKKDDKKDDKKDDK. The chain crosses the membrane as a helical span at residues 215 to 236; the sequence is TIIAAPVFYNWCMLICRACFDE. Topologically, residues 237–246 are extracellular; sequence LQIDHIKLWL. A helical membrane pass occupies residues 247 to 267; sequence FLDYCSDIIYVFDMFVRFRTG. Residues 268-292 lie on the Cytoplasmic side of the membrane; sequence FLEQGLLVKDEKKLRDHYTQTVQFK. Residues 293 to 311 form a helical membrane-spanning segment; it reads LDVLSLLPTDLAYLKLGLN. The Extracellular segment spans residues 312 to 316; sequence YPELR. The helical transmembrane segment at 317 to 335 threads the bilayer; sequence FNRLLRIARLFEFFDRTET. Residues 336-342 lie on the Cytoplasmic side of the membrane; that stretch reads RTNYPNM. The chain crosses the membrane as a helical span at residues 343–366; that stretch reads FRIGNLVLYILIIIHWNACIYFAI. Residues 367 to 389 lie on the Extracellular side of the membrane; sequence SKVIGFGTDSWVYPNVSIPEYGR. 2 helical membrane passes run 390 to 424 and 425 to 449; these read LSRK…LFVV and IDFL…SNMN. Residues 450-735 are Cytoplasmic-facing; the sequence is ASRAEFQAKV…PEKPEEQKKD (286 aa). Residues 532 to 654, E591, and R606 each bind 3',5'-cyclic GMP; that span reads LLIE…DNLI. The segment at 715-735 is disordered; that stretch reads GSGSLSVGEPEPEKPEEQKKD. Residues 725–735 show a composition bias toward basic and acidic residues; it reads EPEKPEEQKKD.

It belongs to the cyclic nucleotide-gated cation channel (TC 1.A.1.5) family.

It is found in the membrane. In terms of biological role, visual signal transduction is mediated by a G-protein coupled cascade using cGMP as second messenger. This protein can be activated by cyclic GMP which leads to an opening of the cation channel and thereby causing a depolarization of cone photoreceptors. The protein is Cyclic nucleotide-gated channel cone photoreceptor subunit alpha of Gallus gallus (Chicken).